The following is a 394-amino-acid chain: Elongation factor Tu (394 aa).

Residues 10 to 204 (KPHVNVGTIG…ALDTYIPEPE (195 aa)) enclose the tr-type G domain. The tract at residues 19–26 (GHVDHGKT) is G1. 19–26 (GHVDHGKT) contributes to the GTP binding site. A Mg(2+)-binding site is contributed by threonine 26. The segment at 60–64 (GITIN) is G2. The interval 81–84 (DCPG) is G3. Residues 81–85 (DCPGH) and 136–139 (NKCD) each bind GTP. The interval 136–139 (NKCD) is G4. The G5 stretch occupies residues 174-176 (SAL).

It belongs to the TRAFAC class translation factor GTPase superfamily. Classic translation factor GTPase family. EF-Tu/EF-1A subfamily. Monomer.

The protein resides in the cytoplasm. It carries out the reaction GTP + H2O = GDP + phosphate + H(+). Its function is as follows. GTP hydrolase that promotes the GTP-dependent binding of aminoacyl-tRNA to the A-site of ribosomes during protein biosynthesis. The chain is Elongation factor Tu from Shewanella halifaxensis (strain HAW-EB4).